A 133-amino-acid polypeptide reads, in one-letter code: Small ribosomal subunit protein uS11 (133 aa).

Belongs to the universal ribosomal protein uS11 family. In terms of assembly, part of the 30S ribosomal subunit. Interacts with proteins S7 and S18. Binds to IF-3.

Functionally, located on the platform of the 30S subunit, it bridges several disparate RNA helices of the 16S rRNA. Forms part of the Shine-Dalgarno cleft in the 70S ribosome. The sequence is that of Small ribosomal subunit protein uS11 from Shouchella clausii (strain KSM-K16) (Alkalihalobacillus clausii).